Consider the following 395-residue polypeptide: Cyclomarin C epoxidase CymV (395 aa).

The protein belongs to the cytochrome P450 family.

In terms of biological role, cytochrome P450; part of the gene cluster that mediates the biosynthesis of cyclic heptapeptides, known as cyclomarins and also of cyclic dipeptides, called cyclomarazines, which have both antimicrobial and cytotoxic effects. First, CymD catalyzes the reverse N-prenylation of monomeric L-tryptophan with dimethylallyl diphosphate (DMAPP) to form N-(1,1-dimethylallyl)-tryptophan (r-N-DMAT). The N-(1,1-dimethylallyl)-tryptophan produced by CymD is then combined with a range of standard and nonproteinogenic amino acid substrates to synthesize the peptides, a process that is probably catalyzed by the non-canonical nonribosomal peptide synthetase (NRPS), CymA. Other proteins in the cluster catalyze further modifications of the peptides including CymV which catalyzes the oxidation of olefinic cyclomarins and cyclomarazines to their respective epoxide derivatives. The polypeptide is Cyclomarin C epoxidase CymV (Salinispora arenicola (strain CNS-205)).